The sequence spans 600 residues: Rhesus-like glycoprotein B (600 aa).

Topologically, residues 1 to 16 are cytoplasmic; it reads MSKDEHKLPLSKRKES. A helical transmembrane segment spans residues 17–37; that stretch reads IIFMMILFAFQVFMVVLFSVW. Residues 38-73 lie on the Extracellular side of the membrane; sequence VRYSKNEVNYSTLTPEQLQELEATGGVVQEEVTNIY. N-linked (GlcNAc...) asparagine glycosylation occurs at Asn46. Residues 74–94 form a helical membrane-spanning segment; that stretch reads GYFRDINIMIFFGFGFLMTFL. The Cytoplasmic portion of the chain corresponds to 95–102; that stretch reads RRYGYSAL. Residues 103–123 form a helical membrane-spanning segment; that stretch reads GYTFIISALVAQWSVLIYGFF. The Extracellular portion of the chain corresponds to 124-145; that stretch reads ETVDHKNDHGGDYASTFEMSQT. A helical membrane pass occupies residues 146–166; the sequence is VLLQGLFCAGAVMISYGAVLG. The Cytoplasmic portion of the chain corresponds to 167–170; the sequence is RVTP. A helical transmembrane segment spans residues 171–191; sequence LQMLVVGIFEPIFYFLNMFIG. Residues 192-199 are Extracellular-facing; the sequence is EMNLEAID. Residues 200–220 traverse the membrane as a helical segment; sequence VGGGMYIHLFGSVFGLTIAWF. Over 221–240 the chain is Cytoplasmic; sequence LTDKKSKDCEDNSPSYTGDY. A helical transmembrane segment spans residues 241-261; sequence FAMAGTLFLWMMWPSFNAAIA. Topologically, residues 262-274 are extracellular; the sequence is PLGEPQFRAIANT. The helical transmembrane segment at 275–295 threads the bilayer; it reads FLSLTASTIATFIVTRLFGHL. The Cytoplasmic portion of the chain corresponds to 296-303; that stretch reads GHKIDMVH. A helical membrane pass occupies residues 304–323; the sequence is VQNSSLAGGVVQGCLAHMNI. Residues 324 to 325 lie on the Extracellular side of the membrane; the sequence is NP. A helical membrane pass occupies residues 326-346; sequence GGAIGMGFLAGVISVIGYLFI. Over 347 to 361 the chain is Cytoplasmic; the sequence is SPFLQRRFNIQDTCG. The helical transmembrane segment at 362 to 382 threads the bilayer; that stretch reads IHNLHFMPGFIGSIAACIAAW. The Extracellular segment spans residues 383 to 411; sequence KGLNDRSLYNPIEFNQIFRAGEDQARNNA. A helical membrane pass occupies residues 412–432; the sequence is AATFISIGIAIAGGLFVGMIL. Residues 433–600 are Cytoplasmic-facing; that stretch reads KALKKVGGLK…SSTNSPTSKV (168 aa). The interval 471–600 is disordered; the sequence is NLPMPTTDNG…SSTNSPTSKV (130 aa). Basic and acidic residues predominate over residues 498–510; it reads NKKENGYRRDLIR. Low complexity predominate over residues 519-529; the sequence is EQSTDSSYSDS. Over residues 540–554 the composition is skewed to basic residues; sequence RIRKLAKKSYRRSKK. A compositionally biased stretch (basic and acidic residues) spans 555-566; it reads SHSEHQPQHQPE. Low complexity predominate over residues 571 to 580; sequence NNNNNNNNNN. The span at 581 to 600 shows a compositional bias: polar residues; the sequence is ATAETTDNGGSSTNSPTSKV.

Belongs to the ammonium transporter (TC 2.A.49) family. Rh subfamily.

The protein resides in the membrane. May be a carbon dioxide/bicarbonate transporter. The sequence is that of Rhesus-like glycoprotein B (rhgB) from Dictyostelium discoideum (Social amoeba).